The chain runs to 219 residues: Suppressor-of-stellate-like protein (219 aa).

The segment at 194 to 219 is disordered; the sequence is SAESPPIKVESSVSKSPSWLRNVPNF. Polar residues predominate over residues 204–219; it reads SSVSKSPSWLRNVPNF.

It belongs to the casein kinase 2 subunit beta family.

The sequence is that of Suppressor-of-stellate-like protein (Ssl) from Drosophila melanogaster (Fruit fly).